A 491-amino-acid polypeptide reads, in one-letter code: 3-octaprenyl-4-hydroxybenzoate carboxy-lyase (491 aa).

Asn-176 serves as a coordination point for Mn(2+). Residues Ile-179–Arg-181, Arg-193–Leu-195, and Arg-198–Gly-199 contribute to the prenylated FMN site. Glu-242 contacts Mn(2+). Asp-291 functions as the Proton donor in the catalytic mechanism.

Belongs to the UbiD family. Homohexamer. Requires prenylated FMN as cofactor. Mn(2+) serves as cofactor.

It is found in the cell membrane. The enzyme catalyses a 4-hydroxy-3-(all-trans-polyprenyl)benzoate + H(+) = a 2-(all-trans-polyprenyl)phenol + CO2. Its pathway is cofactor biosynthesis; ubiquinone biosynthesis. Catalyzes the decarboxylation of 3-octaprenyl-4-hydroxy benzoate to 2-octaprenylphenol, an intermediate step in ubiquinone biosynthesis. The chain is 3-octaprenyl-4-hydroxybenzoate carboxy-lyase from Chromobacterium violaceum (strain ATCC 12472 / DSM 30191 / JCM 1249 / CCUG 213 / NBRC 12614 / NCIMB 9131 / NCTC 9757 / MK).